The sequence spans 98 residues: Protein translation factor SUI1 homolog (98 aa).

This sequence belongs to the SUI1 family.

In Thermococcus gammatolerans (strain DSM 15229 / JCM 11827 / EJ3), this protein is Protein translation factor SUI1 homolog.